Here is a 976-residue protein sequence, read N- to C-terminus: Ephrin type-A receptor 2 (976 aa).

The signal sequence occupies residues 1-23 (MELQAARACFALLWGCALAAAAA). The segment at 1-206 (MELQAARACF…YYKKCPELLQ (206 aa)) is mediates interaction with CLDN4. The Extracellular portion of the chain corresponds to 24–537 (AQGKEVVLLD…SPEGSGNLAV (514 aa)). An Eph LBD domain is found at 28–206 (EVVLLDFAAA…YYKKCPELLQ (179 aa)). 2 cysteine pairs are disulfide-bonded: C70–C188 and C105–C115. In terms of domain architecture, Fibronectin type-III 1 spans 328–432 (PPSAPHYLTA…TSRSFRTASV (105 aa)). Residues N407 and N435 are each glycosylated (N-linked (GlcNAc...) asparagine). The Fibronectin type-III 2 domain maps to 438–529 (EPPKVRLEGR…KVHEFQTLSP (92 aa)). A helical transmembrane segment spans residues 538-558 (IGGVAVGVVLLLVLAGVGFFI). Over 559–976 (HRRRKNQRAR…DQVNTVGIPI (418 aa)) the chain is Cytoplasmic. Residue S570 is modified to Phosphoserine. A Phosphotyrosine modification is found at Y575. Residue S579 is modified to Phosphoserine. Y588 bears the Phosphotyrosine; by autocatalysis mark. Position 594 is a phosphotyrosine (Y594). A mediates interaction with ARHGEF16 and ELMO2 region spans residues 606-906 (TEIHPSCVTR…STSGSEGVPF (301 aa)). The 263-residue stretch at 613–875 (VTRQKVIGAG…DIVSILDKLI (263 aa)) folds into the Protein kinase domain. Residue 619–627 (IGAGEFGEV) coordinates ATP. Y628 carries the phosphotyrosine modification. K646 serves as a coordination point for ATP. Position 647 is a phosphothreonine (T647). At Y735 the chain carries Phosphotyrosine; by autocatalysis. The active-site Proton acceptor is D739. At Y772 the chain carries Phosphotyrosine. Phosphoserine occurs at positions 869 and 892. The negatively regulates interaction with ARHGEF16 stretch occupies residues 886-976 (DFDPRVSIRL…DQVNTVGIPI (91 aa)). Phosphoserine; by PKB/AKT1, RPS6KA1, RPS6KA3 AND PKA is present on S897. S901 bears the Phosphoserine mark. Residues 904–968 (VPFRTVSEWL…AYSLLGLKDQ (65 aa)) enclose the SAM domain. Y921 carries the post-translational modification Phosphotyrosine; by autocatalysis. Y930 is subject to Phosphotyrosine. The PDZ-binding signature appears at 974–976 (IPI).

It belongs to the protein kinase superfamily. Tyr protein kinase family. Ephrin receptor subfamily. As to quaternary structure, homodimer. Interacts with SLA. Interacts (phosphorylated form) with VAV2, VAV3 and PI3-kinase p85 subunit (PIK3R1, PIK3R2 or PIK3R3); critical for the EFNA1-induced activation of RAC1 which stimulates cell migration. Interacts with INPPL1; regulates activated EPHA2 endocytosis and degradation. Interacts (inactivated form) with PTK2/FAK1 and interacts (EFNA1 ligand-activated form) with PTPN11; regulates integrin-mediated adhesion. Interacts with ARHGEF16, DOCK4 and ELMO2; mediates ligand-independent activation of RAC1 which stimulates cell migration. Interacts with CLDN4; phosphorylates CLDN4 and may regulate tight junctions. Interacts with ACP1. Interacts (via SAM domain) with ANKS1A (via SAM domain). Interacts with CEMIP. Interacts with NCK1; may regulate EPHA2 activity in cell migration and adhesion. Interacts with TIMD4. (Microbial infection) Interacts with human herpes virus 8/HHV-8 glycoprotein L/gL and glycoprotein H/gH heterodimer; this interaction triggers EPHA2 phosphorylation and endocytosis, allowing virus entry. In terms of assembly, (Microbial infection) Interacts with human cytomegalovirus (HCMV) glycoprotein L/gL and glycoprotein H/gH heterodimer. As to quaternary structure, (Microbial infection) Interacts with Epstein-Barr virus/HHV-4 glycoprotein L/gL and glycoprotein H/gH heterodimer; this interaction facilitates virus internalization and fusion. In terms of processing, autophosphorylates. Phosphorylated on tyrosine upon binding and activation by EFNA1. Phosphorylated residues Tyr-588 and Tyr-594 are required for binding VAV2 and VAV3 while phosphorylated residues Tyr-735 and Tyr-930 are required for binding PI3-kinase p85 subunit (PIK3R1, PIK3R2 or PIK3R3). These phosphorylated residues are critical for recruitment of VAV2 and VAV3 and PI3-kinase p85 subunit which transduce downstream signaling to activate RAC1 GTPase and cell migration. Dephosphorylation of Tyr-930 by PTPRF prevents the interaction of EPHA2 with NCK1. Phosphorylated at Ser-897 by PKB; serum-induced phosphorylation which targets EPHA2 to the cell leading edge and stimulates cell migration. Phosphorylation by PKB is inhibited by EFNA1-activated EPHA2 which regulates PKB activity via a reciprocal regulatory loop. Phosphorylated at Ser-897 in response to TNF by RPS6KA1 and RPS6KA3; RPS6KA-EPHA2 signaling pathway controls cell migration. Phosphorylated at Ser-897 by PKA; blocks cell retraction induced by EPHA2 kinase activity. Dephosphorylated by ACP1. Post-translationally, ubiquitinated by CHIP/STUB1. Ubiquitination is regulated by the HSP90 chaperone and regulates the receptor stability and activity through proteasomal degradation. ANKS1A prevents ubiquitination and degradation. Expressed in brain and glioma tissue and glioma cell lines (at protein level). Expressed most highly in tissues that contain a high proportion of epithelial cells, e.g. skin, intestine, lung, and ovary.

It is found in the cell membrane. It localises to the cell projection. Its subcellular location is the ruffle membrane. The protein localises to the lamellipodium membrane. The protein resides in the cell junction. It is found in the focal adhesion. It catalyses the reaction L-tyrosyl-[protein] + ATP = O-phospho-L-tyrosyl-[protein] + ADP + H(+). In terms of biological role, receptor tyrosine kinase which binds promiscuously membrane-bound ephrin-A family ligands residing on adjacent cells, leading to contact-dependent bidirectional signaling into neighboring cells. The signaling pathway downstream of the receptor is referred to as forward signaling while the signaling pathway downstream of the ephrin ligand is referred to as reverse signaling. Activated by the ligand ephrin-A1/EFNA1 regulates migration, integrin-mediated adhesion, proliferation and differentiation of cells. Regulates cell adhesion and differentiation through DSG1/desmoglein-1 and inhibition of the ERK1/ERK2 (MAPK3/MAPK1, respectively) signaling pathway. May also participate in UV radiation-induced apoptosis and have a ligand-independent stimulatory effect on chemotactic cell migration. During development, may function in distinctive aspects of pattern formation and subsequently in development of several fetal tissues. Involved for instance in angiogenesis, in early hindbrain development and epithelial proliferation and branching morphogenesis during mammary gland development. Engaged by the ligand ephrin-A5/EFNA5 may regulate lens fiber cells shape and interactions and be important for lens transparency development and maintenance. With ephrin-A2/EFNA2 may play a role in bone remodeling through regulation of osteoclastogenesis and osteoblastogenesis. (Microbial infection) Acts as a receptor for hepatitis C virus (HCV) in hepatocytes and facilitates its cell entry. Mediates HCV entry by promoting the formation of the CD81-CLDN1 receptor complexes that are essential for HCV entry and by enhancing membrane fusion of cells expressing HCV envelope glycoproteins. Functionally, acts as a receptor for human cytomegalovirus (HCMV) to mediate viral entry and fusion in glioblastoma cells. In Homo sapiens (Human), this protein is Ephrin type-A receptor 2 (EPHA2).